The sequence spans 357 residues: THUMP domain-containing protein 1 (357 aa).

Residues 1–10 (MAARIQQSPQ) are compositionally biased toward polar residues. 2 disordered regions span residues 1–38 (MAARIQQSPQPGGGKRKGKAQYVQAKRARRWDGGGPRQ) and 74–95 (GPEKFADKDQQPSGSEGEDDDV). Ala-2 is subject to N-acetylalanine. Residues Ser-8, Ser-86, Ser-88, and Ser-119 each carry the phosphoserine modification. The 108-residue stretch at 147-254 (DIYKTKKKKT…KAVCCLSVVK (108 aa)) folds into the THUMP domain. Ser-270 is modified (phosphoserine). Polar residues-rich tracts occupy residues 276–287 (QLNPKQAAQTGN) and 298–315 (KSSQNDPAEGKNNQQVVP). The segment at 276–357 (QLNPKQAAQT…EGSESNENDL (82 aa)) is disordered.

It belongs to the THUMPD1 family. Interacts with NAT10. Binds tRNA.

Functionally, functions as a tRNA-binding adapter to mediate NAT10-dependent tRNA acetylation modifying cytidine to N4-acetylcytidine (ac4C). The chain is THUMP domain-containing protein 1 (THUMPD1) from Bos taurus (Bovine).